The following is a 235-amino-acid chain: Pyridoxine 5'-phosphate synthase (235 aa).

Asn-6 is a binding site for 3-amino-2-oxopropyl phosphate. 8-9 lines the 1-deoxy-D-xylulose 5-phosphate pocket; it reads DH. Residue Arg-17 coordinates 3-amino-2-oxopropyl phosphate. His-42 acts as the Proton acceptor in catalysis. The 1-deoxy-D-xylulose 5-phosphate site is built by Arg-44 and His-49. Glu-69 functions as the Proton acceptor in the catalytic mechanism. Thr-99 serves as a coordination point for 1-deoxy-D-xylulose 5-phosphate. The active-site Proton donor is His-188. Residues Gly-189 and 210–211 each bind 3-amino-2-oxopropyl phosphate; that span reads GH.

It belongs to the PNP synthase family. Homooctamer; tetramer of dimers.

The protein resides in the cytoplasm. It carries out the reaction 3-amino-2-oxopropyl phosphate + 1-deoxy-D-xylulose 5-phosphate = pyridoxine 5'-phosphate + phosphate + 2 H2O + H(+). It participates in cofactor biosynthesis; pyridoxine 5'-phosphate biosynthesis; pyridoxine 5'-phosphate from D-erythrose 4-phosphate: step 5/5. Functionally, catalyzes the complicated ring closure reaction between the two acyclic compounds 1-deoxy-D-xylulose-5-phosphate (DXP) and 3-amino-2-oxopropyl phosphate (1-amino-acetone-3-phosphate or AAP) to form pyridoxine 5'-phosphate (PNP) and inorganic phosphate. This chain is Pyridoxine 5'-phosphate synthase, found in Wolbachia pipientis subsp. Culex pipiens (strain wPip).